The sequence spans 329 residues: GTP 3',8-cyclase (329 aa).

Residues Ala8–Arg229 form the Radical SAM core domain. Residue Arg17 coordinates GTP. [4Fe-4S] cluster-binding residues include Cys24 and Cys28. Tyr30 provides a ligand contact to S-adenosyl-L-methionine. Cys31 is a binding site for [4Fe-4S] cluster. Position 68 (Arg68) interacts with GTP. Gly72 provides a ligand contact to S-adenosyl-L-methionine. Thr99 is a GTP binding site. S-adenosyl-L-methionine is bound at residue Ser123. Lys160 contributes to the GTP binding site. Position 194 (Met194) interacts with S-adenosyl-L-methionine. [4Fe-4S] cluster contacts are provided by Cys257 and Cys260. Arg262 to Arg264 lines the GTP pocket. [4Fe-4S] cluster is bound at residue Cys274.

Belongs to the radical SAM superfamily. MoaA family. In terms of assembly, monomer and homodimer. Requires [4Fe-4S] cluster as cofactor.

The catalysed reaction is GTP + AH2 + S-adenosyl-L-methionine = (8S)-3',8-cyclo-7,8-dihydroguanosine 5'-triphosphate + 5'-deoxyadenosine + L-methionine + A + H(+). The protein operates within cofactor biosynthesis; molybdopterin biosynthesis. Functionally, catalyzes the cyclization of GTP to (8S)-3',8-cyclo-7,8-dihydroguanosine 5'-triphosphate. In Edwardsiella ictaluri (strain 93-146), this protein is GTP 3',8-cyclase.